The following is a 230-amino-acid chain: Secretory carrier-associated membrane protein 4 (230 aa).

At 1–39 (MAGKENNFPPLPHFLPLKPCFYQDFSDEIPVEHQVLVKR) the chain is on the cytoplasmic side. The next 4 membrane-spanning stretches (helical) occupy residues 40 to 60 (IYRL…ACLA), 61 to 81 (WWIA…LVLF), 106 to 126 (MAFF…AIGF), and 149 to 169 (VVML…AITI). At 170–230 (VKVHRIYRGA…SYSTSGSQWP (61 aa)) the chain is on the cytoplasmic side. The residue at position 194 (threonine 194) is a Phosphothreonine. Residues 197 to 230 (NPPSREAQFNSFSGNSLPEYPTVPSYSTSGSQWP) form a disordered region. Composition is skewed to polar residues over residues 203-212 (AQFNSFSGNS) and 220-230 (PSYSTSGSQWP).

Belongs to the SCAMP family.

Its subcellular location is the membrane. Functionally, probably involved in membrane protein trafficking. The sequence is that of Secretory carrier-associated membrane protein 4 (Scamp4) from Rattus norvegicus (Rat).